We begin with the raw amino-acid sequence, 162 residues long: Xylulose kinase (162 aa).

Positions 16 to 39 (GGHSATPRPATGPAGPAAHSGRHQ) are disordered. The span at 20 to 33 (ATPRPATGPAGPAA) shows a compositional bias: low complexity.

This sequence belongs to the FGGY kinase family.

The enzyme catalyses D-xylulose + ATP = D-xylulose 5-phosphate + ADP + H(+). Its function is as follows. Catalyzes the phosphorylation of D-xylulose to D-xylulose 5-phosphate. This Actinoplanes sp. (strain ATCC 31351 / 3876) (Ampullariella sp.) protein is Xylulose kinase.